The primary structure comprises 216 residues: Redox-sensing transcriptional repressor Rex (216 aa).

Positions 20 to 59 form a DNA-binding region, H-T-H motif; it reads QYYRLFKSLVEENVTRTNSQLISEKIGVDAATIRRDFSLF. 94 to 99 serves as a coordination point for NAD(+); that stretch reads GVGNLG.

The protein belongs to the transcriptional regulatory Rex family. As to quaternary structure, homodimer.

The protein localises to the cytoplasm. Modulates transcription in response to changes in cellular NADH/NAD(+) redox state. In Lactococcus lactis subsp. lactis (strain IL1403) (Streptococcus lactis), this protein is Redox-sensing transcriptional repressor Rex.